Reading from the N-terminus, the 442-residue chain is Terpene cyclase aneC (442 aa).

4 residues coordinate Mg(2+): D196, N327, S331, and E335. (2E,6E)-farnesyl diphosphate contacts are provided by R419 and Y420.

This sequence belongs to the terpene synthase family. As to quaternary structure, homodimer. The cofactor is Mg(2+).

It catalyses the reaction (2E,6E)-farnesyl diphosphate = dauca-4,7-diene + diphosphate. The protein operates within secondary metabolite biosynthesis. Terpene cyclase; part of the gene cluster that mediates the biosynthesis of aculenes, a unique type of norsesquiterpenes that contain a nordaucane skeleton linked to an L-proline moiety and are of mixed biosynthetic origin. The pathway begins with the synthesis of dauca-4,7-diene by the terpene cyclase aneC using farnesyl pyrophosphate (FPP) as substrate. The cytochrome P450 monooxygenase aneF then performs the initial oxidation at C-12 of dauca-4,7-diene to yield asperaculane D. Asperaculane D is substrate of the cytochrome P450 monooxygenase aneD for C-10 hydroxylation to yield asperaculane E. The cytochrome P450 monooxygenase aneG then converts asperaculane E into aculene D via C-2 oxidation. The monomodular nonribosomal peptide synthtase aneB adenylates L-proline and the thiohydrolase aneE transfers this activated L-proline derivative to aculenes D and C to produce respectively aculenes B and A. The dioxygenase aneA converts aculene D into aculene C, and aculene B into aculene A by introducing the 5,6-alkene moiety. Asperculanes A, B, C and F, as well as 14-prolyl asperculane C, might be shunt products of the pathway. In Aspergillus aculeatus (strain ATCC 16872 / CBS 172.66 / WB 5094), this protein is Terpene cyclase aneC.